Reading from the N-terminus, the 240-residue chain is MADLILSSSSAQSSLLHVRPNHYLLNTSTASPIRSVRFQNSNGFHPLAFASGHRRLPLGAVVPSDSTKTITSTITANCVDSGVKAVEVEPTIDYGGGGGIGGDKFGGGGGGGDGNDDGGEDDKEESDGKKSTPLSMSQKLTLGYAFLVGVGGLMGYLKSGSQKSLLAGGLSAAVLLYVFSQLPTKPVLASTVGVVMAGALMYVMGTRYMRSKKIFPAGVVSIMSFIMTGGYIHGIMRSLH.

A chloroplast-targeting transit peptide spans 1 to 84; it reads MADLILSSSS…TANCVDSGVK (84 aa). Residues 97–113 show a composition bias toward gly residues; it reads GGGIGGDKFGGGGGGGD. The tract at residues 97–134 is disordered; it reads GGGIGGDKFGGGGGGGDGNDDGGEDDKEESDGKKSTPL. The segment covering 114-125 has biased composition (acidic residues); sequence GNDDGGEDDKEE. Helical transmembrane passes span 164 to 184, 186 to 206, and 214 to 234; these read SLLAGGLSAAVLLYVFSQLPT, PVLASTVGVVMAGALMYVMGT, and IFPAGVVSIMSFIMTGGYIHG.

Belongs to the TMEM14 family.

The protein localises to the plastid. Its subcellular location is the chloroplast membrane. In terms of biological role, may be involved in free fatty acids export from the plastids. In Arabidopsis thaliana (Mouse-ear cress), this protein is Protein FATTY ACID EXPORT 2, chloroplastic.